Reading from the N-terminus, the 210-residue chain is Germin-like protein subfamily 3 member 4 (210 aa).

The N-terminal stretch at 1 to 18 (MKFFVVIVFCAIFLSVSG) is a signal peptide. Cys-27 and Cys-44 form a disulfide bridge. The Cupin type-1 domain occupies 58 to 190 (TKLTEAGDTD…VFGIDQEHIK (133 aa)). Asn-73 carries an N-linked (GlcNAc...) asparagine glycan. Residues His-106, His-108, Glu-113, and His-152 each contribute to the Mn(2+) site.

It belongs to the germin family. As to quaternary structure, oligomer (believed to be a pentamer but probably hexamer).

It localises to the secreted. The protein localises to the extracellular space. It is found in the apoplast. May play a role in plant defense. Probably has no oxalate oxidase activity even if the active site is conserved. This is Germin-like protein subfamily 3 member 4 from Arabidopsis thaliana (Mouse-ear cress).